A 634-amino-acid polypeptide reads, in one-letter code: 1-deoxy-D-xylulose-5-phosphate synthase (634 aa).

Thiamine diphosphate is bound by residues histidine 74 and 115–117 (AHS). Aspartate 146 lines the Mg(2+) pocket. Residues 147-148 (GA), asparagine 176, tyrosine 283, and glutamate 365 contribute to the thiamine diphosphate site. Residue asparagine 176 coordinates Mg(2+).

The protein belongs to the transketolase family. DXPS subfamily. In terms of assembly, homodimer. It depends on Mg(2+) as a cofactor. Requires thiamine diphosphate as cofactor.

It carries out the reaction D-glyceraldehyde 3-phosphate + pyruvate + H(+) = 1-deoxy-D-xylulose 5-phosphate + CO2. It participates in metabolic intermediate biosynthesis; 1-deoxy-D-xylulose 5-phosphate biosynthesis; 1-deoxy-D-xylulose 5-phosphate from D-glyceraldehyde 3-phosphate and pyruvate: step 1/1. Its function is as follows. Catalyzes the acyloin condensation reaction between C atoms 2 and 3 of pyruvate and glyceraldehyde 3-phosphate to yield 1-deoxy-D-xylulose-5-phosphate (DXP). The polypeptide is 1-deoxy-D-xylulose-5-phosphate synthase (Burkholderia mallei (strain ATCC 23344)).